The sequence spans 563 residues: Protein NRT1/ PTR FAMILY 5.9 (563 aa).

Residues 56–76 (TWAGFTSMLPLFSAPLADTYW) traverse the membrane as a helical segment. At Thr81 the chain carries Phosphothreonine. A run of 10 helical transmembrane segments spans residues 82–102 (ILAS…TAFA), 110–130 (TISS…LGVL), 168–188 (FFQL…TVMA), 194–214 (FGWV…ILVF), 317–337 (FPIW…ATFF), 362–382 (TITL…IPIT), 394–414 (VMER…IAAI), 441–461 (IFWL…TVVG), 479–499 (FALY…LISI), and 528–548 (WLLA…CKFF).

This sequence belongs to the major facilitator superfamily. Proton-dependent oligopeptide transporter (POT/PTR) (TC 2.A.17) family. In terms of tissue distribution, expressed in roots and flowers.

It is found in the membrane. In Arabidopsis thaliana (Mouse-ear cress), this protein is Protein NRT1/ PTR FAMILY 5.9 (NPF5.9).